The sequence spans 200 residues: Casparian strip membrane protein 1 (200 aa).

Over 1–38 (MKSGDHAAIDVPESSAVAKGKAPLIATPREQKSGFKKG) the chain is Cytoplasmic. Residues 39–59 (LGIFDFLLRLGAIIAALAAAA) form a helical membrane-spanning segment. Over 60–86 (TMGTSDETLPFFTQFFQFEASYDDLPT) the chain is Extracellular. A helical membrane pass occupies residues 87–107 (FMFFVIAMALIGGYLVLSLPF). At 108–121 (SIVTIVRPHAVAPR) the chain is on the cytoplasmic side. A helical membrane pass occupies residues 122–142 (LLLFILDIVALTLTTAAGAAA). The Extracellular segment spans residues 143–171 (AAIVYLAHNGNPNTNWLAICQQFGDFCQE). The chain crosses the membrane as a helical span at residues 172–192 (VSGAVVASFVTVVVLMSLVLL). At 193 to 200 (SGVALKKH) the chain is on the cytoplasmic side.

This sequence belongs to the Casparian strip membrane proteins (CASP) family. In terms of assembly, homodimer and heterodimers.

It localises to the cell membrane. In terms of biological role, regulates membrane-cell wall junctions and localized cell wall deposition. Required for establishment of the Casparian strip membrane domain (CSD) and the subsequent formation of Casparian strips, a cell wall modification of the root endodermis that determines an apoplastic barrier between the intraorganismal apoplasm and the extraorganismal apoplasm and prevents lateral diffusion. In Theobroma cacao (Cacao), this protein is Casparian strip membrane protein 1.